Consider the following 395-residue polypeptide: Transcription termination/antitermination protein NusA (395 aa).

An S1 motif domain is found at 137–201 (NSVLMGQVIL…TKKGLLLELS (65 aa)). KH domains lie at 243 to 291 (SHNA…TLAL) and 331 to 378 (KVRL…NESE).

It belongs to the NusA family. Monomer. Binds directly to the core enzyme of the DNA-dependent RNA polymerase and to nascent RNA.

The protein localises to the cytoplasm. Participates in both transcription termination and antitermination. This Helicobacter pylori (strain ATCC 700392 / 26695) (Campylobacter pylori) protein is Transcription termination/antitermination protein NusA.